A 384-amino-acid polypeptide reads, in one-letter code: 4-hydroxy-3-methylbut-2-en-1-yl diphosphate synthase (flavodoxin) (384 aa).

[4Fe-4S] cluster contacts are provided by Cys280, Cys283, Cys315, and Glu322.

This sequence belongs to the IspG family. The cofactor is [4Fe-4S] cluster.

The enzyme catalyses (2E)-4-hydroxy-3-methylbut-2-enyl diphosphate + oxidized [flavodoxin] + H2O + 2 H(+) = 2-C-methyl-D-erythritol 2,4-cyclic diphosphate + reduced [flavodoxin]. The protein operates within isoprenoid biosynthesis; isopentenyl diphosphate biosynthesis via DXP pathway; isopentenyl diphosphate from 1-deoxy-D-xylulose 5-phosphate: step 5/6. Converts 2C-methyl-D-erythritol 2,4-cyclodiphosphate (ME-2,4cPP) into 1-hydroxy-2-methyl-2-(E)-butenyl 4-diphosphate. In Parafrankia sp. (strain EAN1pec), this protein is 4-hydroxy-3-methylbut-2-en-1-yl diphosphate synthase (flavodoxin).